A 117-amino-acid polypeptide reads, in one-letter code: DNA-directed RNA polymerase II subunit RPB11 (117 aa).

Methionine 1 carries the N-acetylmethionine modification.

The protein belongs to the archaeal Rpo11/eukaryotic RPB11/RPC19 RNA polymerase subunit family. In terms of assembly, component of the RNA polymerase II (Pol II) core complex consisting of 12 subunits: a ten-subunit catalytic core composed of POLR2A/RPB1, POLR2B/RPB2, POLR2C/RPB3, POLR2I/RPB9, POLR2J/RPB11, POLR2E/RPABC1, POLR2F/RPABC2, POLR2H/RPABC3, POLR2K/RPABC4 and POLR2L/RPABC5 and a mobile stalk composed of two subunits POLR2D/RPB4 and POLR2G/RPB7, protruding from the core and functioning primarily in transcription initiation. Part of Pol II(G) complex, in which Pol II core associates with an additional subunit POLR2M; unlike conventional Pol II, Pol II(G) functions as a transcriptional repressor. Part of TBP-based Pol II pre-initiation complex (PIC), in which Pol II core assembles with general transcription factors and other specific initiation factors including GTF2E1, GTF2E2, GTF2F1, GTF2F2, TCEA1, ERCC2, ERCC3, GTF2H2, GTF2H3, GTF2H4, GTF2H5, GTF2A1, GTF2A2, GTF2B and TBP; this large multi-subunit PIC complex mediates DNA unwinding and targets Pol II core to the transcription start site where the first phosphodiester bond forms. Interacts with PTPN6; this interaction promotes the recruitment of RNA pol II to the PCK1 promoter.

It localises to the nucleus. Its function is as follows. DNA-dependent RNA polymerase catalyzes the transcription of DNA into RNA using the four ribonucleoside triphosphates as substrates. Component of RNA polymerase II which synthesizes mRNA precursors and many functional non-coding RNAs. Pol II is the central component of the basal RNA polymerase II transcription machinery. It is composed of mobile elements that move relative to each other. POLR2J/RPB11 is part of the core element with the central large cleft. The polypeptide is DNA-directed RNA polymerase II subunit RPB11 (POLR2J) (Bos taurus (Bovine)).